The sequence spans 117 residues: Non-specific lipid-transfer protein 2 (117 aa).

An N-terminal signal peptide occupies residues 1 to 25 (MAGLMKLACLVLACMIVAGPITSNA). 4 cysteine pairs are disulfide-bonded: C29/C76, C39/C53, C54/C99, and C74/C113.

This sequence belongs to the plant LTP family.

Plant non-specific lipid-transfer proteins transfer phospholipids as well as galactolipids across membranes. May play a role in wax or cutin deposition in the cell walls of expanding epidermal cells and certain secretory tissues. The protein is Non-specific lipid-transfer protein 2 (LTP2) of Brassica napus (Rape).